A 328-amino-acid polypeptide reads, in one-letter code: Ferredoxin--NADP reductase 2 (328 aa).

FAD contacts are provided by Glu37, Gln45, Tyr50, Val90, Phe124, Asp285, and Thr325.

Belongs to the ferredoxin--NADP reductase type 2 family. As to quaternary structure, homodimer. The cofactor is FAD.

It carries out the reaction 2 reduced [2Fe-2S]-[ferredoxin] + NADP(+) + H(+) = 2 oxidized [2Fe-2S]-[ferredoxin] + NADPH. The protein is Ferredoxin--NADP reductase 2 of Latilactobacillus sakei subsp. sakei (strain 23K) (Lactobacillus sakei subsp. sakei).